The sequence spans 409 residues: tRNA(Met) cytidine acetate ligase (409 aa).

ATP contacts are provided by residues V7–H20, G102, N169, and R194.

It belongs to the TmcAL family.

It is found in the cytoplasm. It carries out the reaction cytidine(34) in elongator tRNA(Met) + acetate + ATP = N(4)-acetylcytidine(34) in elongator tRNA(Met) + AMP + diphosphate. Functionally, catalyzes the formation of N(4)-acetylcytidine (ac(4)C) at the wobble position of elongator tRNA(Met), using acetate and ATP as substrates. First activates an acetate ion to form acetyladenylate (Ac-AMP) and then transfers the acetyl group to tRNA to form ac(4)C34. The polypeptide is tRNA(Met) cytidine acetate ligase (Clostridium botulinum (strain Kyoto / Type A2)).